We begin with the raw amino-acid sequence, 627 residues long: Siderophore iron transporter ARN1 (627 aa).

Residues 1–70 (MESVHSRDPV…TEIIGSAYNK (70 aa)) lie on the Extracellular side of the membrane. Residues 71 to 91 (WYLQAILLLSAFICGYGYGLD) form a helical membrane-spanning segment. Residues 92-110 (GNIRYIYTGYATSSYSEHS) are Cytoplasmic-facing. The helical transmembrane segment at 111–131 (LLSTINVINAVVSAASQIIYA) threads the bilayer. Over 132–135 (RLSD) the chain is Extracellular. The helical transmembrane segment at 136–156 (VFGRLYLFISAVILYVVGTII) threads the bilayer. Residues 157-167 (QSQAYDVQRYA) lie on the Cytoplasmic side of the membrane. A helical membrane pass occupies residues 168-188 (AGAIFYNAGYVGVILILLIIL). At 189-197 (SDFSSLKWR) the chain is on the extracellular side. The chain crosses the membrane as a helical span at residues 198–218 (LLYQFVPTWPFIINTWIAGNI). Over 219–231 (TSRANPVVNWSWD) the chain is Cytoplasmic. The helical transmembrane segment at 232 to 252 (VGMWAFIFPLSCVPIVLCMLH) threads the bilayer. Residues 253 to 290 (MQWRARKTPEWHALKGQKSYYQEHGFIKILKQLFWMLD) are Extracellular-facing. The helical transmembrane segment at 291–311 (VVGVLLMGCSLGCILVPLTLA) threads the bilayer. The Cytoplasmic portion of the chain corresponds to 312 to 323 (GGVKTTWNDSRL). The chain crosses the membrane as a helical span at residues 324-344 (IGPFVLGFVLIPILWIWEYRF). Topologically, residues 345–367 (ARDPILPYRLVKDRAVWSSMGIS) are extracellular. Residues 368–388 (FLIDFIYYMAADYLYTVMIVA) form a helical membrane-spanning segment. Over 389–398 (VNESVKSATR) the chain is Cytoplasmic. Residues 399–419 (IATLSSFVSTVASPFFALLVT) traverse the membrane as a helical segment. Over 420–424 (RCTRL) the chain is Extracellular. Residues 425–445 (KPFIMFGCALWMVAMGLLYHF) traverse the membrane as a helical segment. Residues 446–454 (RGGSQSHSG) are Cytoplasmic-facing. Residues 455-475 (IIGALCVWGVGTTLFTYPVTV) traverse the membrane as a helical segment. At 476 to 563 (SVQSAVSHEN…LMNAYKYVQR (88 aa)) the chain is on the extracellular side. Residues 564–584 (LETIVALVFCVPLIAFSLCLR) form a helical membrane-spanning segment. At 585 to 627 (DPKLTDTVAVEYIEDGEYVDTKDNDPILDWFEKLPSKFTFKRE) the chain is on the cytoplasmic side.

The protein belongs to the major facilitator superfamily.

Its subcellular location is the cell membrane. The protein localises to the endosome membrane. Functionally, involved in the transport of siderophore ferrichrome and so has a role in iron homeostasis. The polypeptide is Siderophore iron transporter ARN1 (ARN1) (Saccharomyces cerevisiae (strain ATCC 204508 / S288c) (Baker's yeast)).